The sequence spans 422 residues: Glycine amidinotransferase, mitochondrial (422 aa).

Residues 1–37 constitute a mitochondrion transit peptide; that stretch reads MLRVRCLRGGSRGAEAVHYIGSMLRKSFVGWVQRSFQ. Catalysis depends on residues aspartate 253 and histidine 302. Catalysis depends on cysteine 406, which acts as the Amidino-cysteine intermediate.

It belongs to the amidinotransferase family. In terms of assembly, homodimer. As to expression, ubiquitously expressed in adult tissues, with highest levels in muscle and intermediate levels in eye, heart, liver, stomach and testis. In stage 28 embryos, expression is higher in the dorsal and ventral parts of the trunk than in the head. In middle gastrulae, expression is highest around the yolk plug, while in stage 15 and tailbud stage embryos, expression is largely restricted to the region around the presumptive notochord and gut.

Its subcellular location is the mitochondrion inner membrane. The catalysed reaction is L-arginine + glycine = guanidinoacetate + L-ornithine. Its pathway is amine and polyamine biosynthesis; creatine biosynthesis; creatine from L-arginine and glycine: step 1/2. Its function is as follows. Catalyzes the biosynthesis of guanidinoacetate, the immediate precursor of creatine. Creatine plays a vital role in energy metabolism in muscle tissues. May play a role in embryonic and central nervous system development. This is Glycine amidinotransferase, mitochondrial from Xenopus laevis (African clawed frog).